A 351-amino-acid polypeptide reads, in one-letter code: Methylthioribose-1-phosphate isomerase (351 aa).

Residues 51-53 (RGA), arginine 94, and glutamine 199 contribute to the substrate site. Aspartate 240 functions as the Proton donor in the catalytic mechanism. 250 to 251 (NK) serves as a coordination point for substrate.

The protein belongs to the eIF-2B alpha/beta/delta subunits family. MtnA subfamily. As to quaternary structure, homodimer.

It carries out the reaction 5-(methylsulfanyl)-alpha-D-ribose 1-phosphate = 5-(methylsulfanyl)-D-ribulose 1-phosphate. It functions in the pathway amino-acid biosynthesis; L-methionine biosynthesis via salvage pathway; L-methionine from S-methyl-5-thio-alpha-D-ribose 1-phosphate: step 1/6. In terms of biological role, catalyzes the interconversion of methylthioribose-1-phosphate (MTR-1-P) into methylthioribulose-1-phosphate (MTRu-1-P). The chain is Methylthioribose-1-phosphate isomerase from Bacillus cereus (strain ATCC 10987 / NRS 248).